We begin with the raw amino-acid sequence, 286 residues long: Shikimate dehydrogenase (NADP(+)) (286 aa).

Shikimate is bound by residues 20 to 22 and Ser-67; that span reads SLS. Residue Lys-71 is the Proton acceptor of the active site. Shikimate is bound by residues Asn-92 and Asp-107. NADP(+)-binding positions include 131-135 and Ala-230; that span reads GGGGA. Tyr-232 serves as a coordination point for shikimate. Gly-253 is an NADP(+) binding site.

Belongs to the shikimate dehydrogenase family. As to quaternary structure, homodimer.

The catalysed reaction is shikimate + NADP(+) = 3-dehydroshikimate + NADPH + H(+). Its pathway is metabolic intermediate biosynthesis; chorismate biosynthesis; chorismate from D-erythrose 4-phosphate and phosphoenolpyruvate: step 4/7. Its function is as follows. Involved in the biosynthesis of the chorismate, which leads to the biosynthesis of aromatic amino acids. Catalyzes the reversible NADPH linked reduction of 3-dehydroshikimate (DHSA) to yield shikimate (SA). This Lactococcus lactis subsp. cremoris (strain MG1363) protein is Shikimate dehydrogenase (NADP(+)).